A 351-amino-acid polypeptide reads, in one-letter code: MAAPLKVCIVGSGNWGSAIARIIGSNAQKLQCFATTVKMWVYEEMVNGKKLSEIINTEHENVKYLPGYKLPENVVAVPQLRDAADGADLLVFVVPHQFIRKLCDEMMGCVSERARGITLIKGIDEGPEGLKLISDIIREKMGIDVSVLMGANIANEVAAEKFCESTIGSKVLENGLLFKDLLQTPNFRITVVDDADTVELCGALKNIVAVGAGFCDGLQCGDNTKAAVIRLGLMEMIAFAKLFSKDDSVSSATFLESCGVADLITTCYGGRNRRVAEAFAKTGKSIEELEKEMLNGQKLQGPLTSAEVYHILKQKGLVEKFPLFTAVYQICFEDKPVRDMITCLQSHPEHL.

11-16 lines the NAD(+) pocket; that stretch reads GSGNWG. Lys-121 contributes to the substrate binding site. Residue Ala-154 coordinates NAD(+). Catalysis depends on Lys-205, which acts as the Proton acceptor. NAD(+) contacts are provided by Arg-271, Lys-298, and Gln-300. 271-272 is a substrate binding site; that stretch reads RN.

The protein belongs to the NAD-dependent glycerol-3-phosphate dehydrogenase family.

The protein resides in the cytoplasm. The catalysed reaction is sn-glycerol 3-phosphate + NAD(+) = dihydroxyacetone phosphate + NADH + H(+). Functionally, plays a role in regulating cardiac sodium current. The sequence is that of Glycerol-3-phosphate dehydrogenase 1-like protein (gpd1l) from Danio rerio (Zebrafish).